The sequence spans 201 residues: Imidazoleglycerol-phosphate dehydratase (201 aa).

It belongs to the imidazoleglycerol-phosphate dehydratase family.

The protein localises to the cytoplasm. It carries out the reaction D-erythro-1-(imidazol-4-yl)glycerol 3-phosphate = 3-(imidazol-4-yl)-2-oxopropyl phosphate + H2O. Its pathway is amino-acid biosynthesis; L-histidine biosynthesis; L-histidine from 5-phospho-alpha-D-ribose 1-diphosphate: step 6/9. This is Imidazoleglycerol-phosphate dehydratase from Prochlorococcus marinus (strain MIT 9301).